A 1190-amino-acid polypeptide reads, in one-letter code: Isoleucine--tRNA ligase, cytoplasmic (1190 aa).

The 'HIGH' region motif lies at 49 to 59; it reads PFATGLPHYGH. The segment at 271-299 is disordered; that stretch reads DKPKAKLSNGPAGDTKKANPKAKGAKPES. Residues 632-636 carry the 'KMSKS' region motif; sequence KMAKK. Residue lysine 635 coordinates ATP.

This sequence belongs to the class-I aminoacyl-tRNA synthetase family.

The protein localises to the cytoplasm. It localises to the cytosol. It catalyses the reaction tRNA(Ile) + L-isoleucine + ATP = L-isoleucyl-tRNA(Ile) + AMP + diphosphate. The sequence is that of Isoleucine--tRNA ligase, cytoplasmic from Arabidopsis thaliana (Mouse-ear cress).